The sequence spans 148 residues: Macrodomain Ter protein (148 aa).

The protein belongs to the MatP family. Homodimer.

It localises to the cytoplasm. Required for spatial organization of the terminus region of the chromosome (Ter macrodomain) during the cell cycle. Prevents early segregation of duplicated Ter macrodomains during cell division. Binds specifically to matS, which is a 13 bp signature motif repeated within the Ter macrodomain. The protein is Macrodomain Ter protein of Haemophilus influenzae (strain 86-028NP).